The chain runs to 647 residues: S-adenosyl-L-methionine-dependent tRNA 4-demethylwyosine synthase (647 aa).

Positions Gly50 to Ile198 constitute a Flavodoxin-like domain. FMN contacts are provided by residues Ser56–Thr60 and Val142–Ile174. The 244-residue stretch at Tyr316 to Glu559 folds into the Radical SAM core domain. Positions 332, 336, and 339 each coordinate [4Fe-4S] cluster.

This sequence belongs to the TYW1 family. Requires [4Fe-4S] cluster as cofactor.

It carries out the reaction N(1)-methylguanosine(37) in tRNA(Phe) + pyruvate + S-adenosyl-L-methionine = 4-demethylwyosine(37) in tRNA(Phe) + 5'-deoxyadenosine + L-methionine + CO2 + H2O. Its pathway is tRNA modification; wybutosine-tRNA(Phe) biosynthesis. Functionally, probable component of the wybutosine biosynthesis pathway. Wybutosine is a hyper modified guanosine with a tricyclic base found at the 3'-position adjacent to the anticodon of eukaryotic phenylalanine tRNA. Catalyzes the condensation of N-methylguanine with 2 carbon atoms from pyruvate to form the tricyclic 4-demethylwyosine, an intermediate in wybutosine biosynthesis. The protein is S-adenosyl-L-methionine-dependent tRNA 4-demethylwyosine synthase (TYW1) of Arabidopsis thaliana (Mouse-ear cress).